Here is a 190-residue protein sequence, read N- to C-terminus: Lipid A acyltransferase PagP (190 aa).

An N-terminal signal peptide occupies residues 1 to 18 (MKRLISCLTIICALNASA). Residues H60, D103, and S104 contribute to the active site.

The protein belongs to the lipid A palmitoyltransferase family. Homodimer.

The protein localises to the cell outer membrane. The enzyme catalyses a lipid A + a 1,2-diacyl-sn-glycero-3-phosphocholine = a hepta-acyl lipid A + a 2-acyl-sn-glycero-3-phosphocholine. It carries out the reaction a lipid IVA + a 1,2-diacyl-sn-glycero-3-phosphocholine = a lipid IVB + a 2-acyl-sn-glycero-3-phosphocholine. It catalyses the reaction a lipid IIA + a 1,2-diacyl-sn-glycero-3-phosphocholine = a lipid IIB + a 2-acyl-sn-glycero-3-phosphocholine. Its function is as follows. Transfers a fatty acid residue from the sn-1 position of a phospholipid to the N-linked hydroxyfatty acid chain on the proximal unit of lipid A or its precursors. This Legionella pneumophila (strain Paris) protein is Lipid A acyltransferase PagP.